A 517-amino-acid chain; its full sequence is MVNSLLFGEMALAFGCPPGGGGGGCPGGGGGGGGAGPGPSPVTAALRDDLGSNIHLLKGLNVRFRCFLAKVHELERRNRLLEKQLEQQQSERERRLRYKTFSREQAVQTGPELLRPPAPGGGHGLSSGAAAGANANAVALGGLPPGGGSHPQHYGRLPGTIWSYTQVRRTGGGGVETVQGPGVSWVHPDGVGVQIDTITPEIRALYNVLAKVKRERDEYKRRWEEELAKRMNLQTMVDTLQEAAQEADAIQEEMNEKIERLKAELVVFKGLMSDPMTDLDTKIQEKAMKVDMDICRRIDITAKLCDVAQQRNSEDVSKIFQVVPKKKERKVASDDDISEQDGEVNRFSDDEVGSMNITDEMKRMFNQLRETFDFDDDCDSLTWEENEDTLLLWEDFTNCNPTIDLQGEQEENLGNLIHETESFFKTRDKEYQETIGQIELELATAKSDMNRHLHEYMEMCSMKRGLDVQMETCRRLIKGSADRNSPSPSSVASSDSGSTDEIQDEFEREADVEPMVS.

The region spanning 53–484 is the IF rod domain; that stretch reads NIHLLKGLNV…RLIKGSADRN (432 aa). 3 disordered regions span residues 104–129, 330–349, and 478–517; these read EQAVQTGPELLRPPAPGGGHGLSSGA, KVASDDDISEQDGEVNRFSD, and KGSADRNSPSPSSVASSDSGSTDEIQDEFEREADVEPMVS. Positions 485–497 are enriched in low complexity; the sequence is SPSPSSVASSDSG. Residues 501-517 show a composition bias toward acidic residues; that stretch reads EIQDEFEREADVEPMVS.

This sequence belongs to the intermediate filament family.

The sequence is that of Intermediate filament family orphan 2 (IFFO2) from Homo sapiens (Human).